We begin with the raw amino-acid sequence, 335 residues long: MGRGKKMSKPGDGRSGDVSDTGRNGGTNENHPKTNGEVVHCGQAKIYSYMSPTKSPSARPPLQEENSVTHHESKCLGKPSTETRKKAEVEKKKILSTELSVKPSEQRETECNSIGEFLEPKLELNDVQRNLALPPEDKLQSQKMVKNKPLRKKTQRQKSPNRKLTDYYPVRRSSRKNKTEIESEEKKRIDELIQTGKEEGIKMHMITGKGRGVIATRDFQRGEFVVEYHGDLIEITDAKRREASYAQDSATGCYMYYFQYLNTSYCIDATRETGRLGRLINHSKSGNCHTKLHNINNVPHLILVASRDINVGEELLYDYGDRRKSSIDAHPWLKN.

Disordered stretches follow at residues 1–91 and 133–183; these read MGRG…EVEK and LPPE…EIES. Residues 67–91 are compositionally biased toward basic and acidic residues; sequence SVTHHESKCLGKPSTETRKKAEVEK. A compositionally biased stretch (basic residues) spans 145 to 161; it reads VKNKPLRKKTQRQKSPN. In terms of domain architecture, SET spans 199–320; it reads EGIKMHMITG…VGEELLYDYG (122 aa). S-adenosyl-L-methionine is bound by residues 209-211, Tyr-254, and 281-282; these read KGR and NH.

This sequence belongs to the class V-like SAM-binding methyltransferase superfamily. Histone-lysine methyltransferase family. PR/SET subfamily.

It localises to the nucleus. The protein resides in the chromosome. The enzyme catalyses L-lysyl(20)-[histone H4] + S-adenosyl-L-methionine = N(6)-methyl-L-lysyl(20)-[histone H4] + S-adenosyl-L-homocysteine + H(+). The catalysed reaction is L-lysyl-[protein] + S-adenosyl-L-methionine = N(6)-methyl-L-lysyl-[protein] + S-adenosyl-L-homocysteine + H(+). Functionally, protein-lysine N-methyltransferase that monomethylates both histones and non-histone proteins. Specifically monomethylates 'Lys-20' of histone H4 (H4K20me1). H4K20me1 is enriched during mitosis and represents a specific tag for epigenetic transcriptional repression. Mainly functions in euchromatin regions, thereby playing a central role in the silencing of euchromatic genes. Required for cell proliferation, probably by contributing to the maintenance of proper higher-order structure of DNA during mitosis. Involved in chromosome condensation and proper cytokinesis. The protein is N-lysine methyltransferase KMT5A-A of Xenopus laevis (African clawed frog).